We begin with the raw amino-acid sequence, 126 residues long: MDISTPCIKCQVHSKYIEEQSEPSKNRYVFAYIITIKNLSKTTVQLMSRSWLITDSNGKQLTIEGDGVVGQQPVIEANDEYTYTSGTVIETPVGVMQGHYVMTDHKGIDFITEVDPFRLAIPNILN.

The 125-residue stretch at 2-126 (DISTPCIKCQ…FRLAIPNILN (125 aa)) folds into the ApaG domain.

This Vibrio atlanticus (strain LGP32) (Vibrio splendidus (strain Mel32)) protein is Protein ApaG.